The primary structure comprises 465 residues: Phospholipase A1-II 5 (465 aa).

The active-site Acyl-ester intermediate is the serine 233. Active-site charge relay system residues include serine 233, aspartate 297, and histidine 336.

It belongs to the AB hydrolase superfamily. Lipase family.

It is found in the cytoplasm. Acylhydrolase that catalyzes the hydrolysis of phospholipids at the sn-1 position. The polypeptide is Phospholipase A1-II 5 (Oryza sativa subsp. japonica (Rice)).